Consider the following 138-residue polypeptide: MKVFIAVFALIAVAAAEFTVSTTEDLQRYRTECVSSLNIPADYVEKFKKWEFPEDDTTMCYIKCVFNKMQLFDDTEGPLVDNLVHQLAHGRDAEEVRTEVLKCVDKNTDNNACHWAFRGFKCFQKNNLSLIKASIKKD.

The signal sequence occupies residues 1 to 16 (MKVFIAVFALIAVAAA). Residue R30 coordinates (5Z,8Z,11Z,14Z)-eicosatetraenoate. R30 and Y61 together coordinate (9Z)-hexadecenoate. (9Z,12Z)-octadecadienoate-binding residues include R30 and Y61. 3 cysteine pairs are disulfide-bonded: C33–C64, C60–C113, and C103–C122. An N-linked (GlcNAc...) asparagine glycan is attached at N127.

Belongs to the PBP/GOBP family. As to quaternary structure, monomer in solution. In terms of tissue distribution, high-level expression in female mouth parts, particularly in the proboscis (at protein level). Moderate-level expression in female antenna (at protein level). Expressed in testis but not in the accessory gland or ejaculatory duct (at protein level). Expressed in spermathecae (at protein level). Female salivary gland. Female chemosensory organs: antenna, palp and proboscis. Not detected in midgut.

It is found in the secreted. Its function is as follows. Involved in modulation of blood-feeding behavior and capacity in female mosquitoes. Required for normal oviposition. Required for normal fecundity and fertility of female and male mosquitoes. Required for normal expression of VGA1 gene, which encodes the egg yolk protein vitellogenin-A1. Involved in regulation of spermatozoa development. Required for normal female longevity when mosquitoes are maintained on regular sugar meal. Binds long chain fatty acids. (Microbial infection) Facilitates shedding of dengue virus type 2 particles into mosquito saliva. Does not affect dengue virus type 2 replication or infection prevalence in midgut and salivary glands at 14 days after blood feeding. Functionally, (Microbial infection) Facilitates shedding of Zika virus particles into mosquito saliva. Does not affect Zika virus replication or infection prevalence in midgut and salivary glands at 14 days after blood feeding. The polypeptide is Odorant-binding protein 22 (Aedes aegypti (Yellowfever mosquito)).